The following is a 633-amino-acid chain: Rab11 family-interacting protein 4 (633 aa).

EF-hand domains follow at residues 17–52 (LFLQ…FAQG) and 50–85 (AQGD…MKGC). Ca(2+) is bound by residues aspartate 30, aspartate 32, aspartate 34, aspartate 63, asparagine 65, arginine 69, and aspartate 74. Disordered stretches follow at residues 152 to 182 (SDLD…LGSL) and 218 to 257 (GEGE…QTPR). A compositionally biased stretch (polar residues) spans 238 to 254 (TNALSDLGSSVPSSAGQ). Residues 410–613 (AREKGTEIVL…EEINYRLRQY (204 aa)) adopt a coiled-coil conformation. An FIP-RBD domain is found at 570 to 632 (EAKSLFSTQT…DHNPSILEIK (63 aa)).

As to quaternary structure, homodimer. Forms a complex with Rab11 (rab11a or rab11b) and arf6.

Its subcellular location is the recycling endosome membrane. The protein localises to the cleavage furrow. It is found in the midbody. It localises to the cytoplasmic vesicle. Acts as a regulator of endocytic traffic by participating in membrane delivery. Required for the abscission step in cytokinesis, possibly by acting as an 'address tag' delivering recycling endosome membranes to the cleavage furrow during late cytokinesis. The chain is Rab11 family-interacting protein 4 (rab11fip4) from Xenopus tropicalis (Western clawed frog).